Reading from the N-terminus, the 123-residue chain is Large ribosomal subunit protein bL12 (123 aa).

Belongs to the bacterial ribosomal protein bL12 family. In terms of assembly, homodimer. Part of the ribosomal stalk of the 50S ribosomal subunit. Forms a multimeric L10(L12)X complex, where L10 forms an elongated spine to which 2 to 4 L12 dimers bind in a sequential fashion. Binds GTP-bound translation factors.

Its function is as follows. Forms part of the ribosomal stalk which helps the ribosome interact with GTP-bound translation factors. Is thus essential for accurate translation. This chain is Large ribosomal subunit protein bL12, found in Bartonella quintana (strain Toulouse) (Rochalimaea quintana).